Reading from the N-terminus, the 164-residue chain is Low molecular weight protein-tyrosine-phosphatase (164 aa).

Catalysis depends on C9, which acts as the Nucleophile. Residue R15 is part of the active site. Residue D128 is the Proton donor of the active site.

The protein belongs to the low molecular weight phosphotyrosine protein phosphatase family.

The catalysed reaction is O-phospho-L-tyrosyl-[protein] + H2O = L-tyrosyl-[protein] + phosphate. Functionally, acts on tyrosine phosphorylated proteins, low-MW aryl phosphates and natural and synthetic acyl phosphates. May be involved in the regulation of sulfur amino acid metabolism. This Streptomyces coelicolor (strain ATCC BAA-471 / A3(2) / M145) protein is Low molecular weight protein-tyrosine-phosphatase (ptpA).